The following is a 214-amino-acid chain: NADH-quinone oxidoreductase subunit C (214 aa).

It belongs to the complex I 30 kDa subunit family. In terms of assembly, NDH-1 is composed of 14 different subunits. Subunits NuoB, C, D, E, F, and G constitute the peripheral sector of the complex.

It localises to the cell inner membrane. The enzyme catalyses a quinone + NADH + 5 H(+)(in) = a quinol + NAD(+) + 4 H(+)(out). NDH-1 shuttles electrons from NADH, via FMN and iron-sulfur (Fe-S) centers, to quinones in the respiratory chain. The immediate electron acceptor for the enzyme in this species is believed to be ubiquinone. Couples the redox reaction to proton translocation (for every two electrons transferred, four hydrogen ions are translocated across the cytoplasmic membrane), and thus conserves the redox energy in a proton gradient. The polypeptide is NADH-quinone oxidoreductase subunit C (Francisella tularensis subsp. novicida (strain U112)).